We begin with the raw amino-acid sequence, 282 residues long: Aquaporin PIP2-7 (282 aa).

The disordered stretch occupies residues 1–21 (MSKEVSVEGEQPPVKDYTDPP). The Cytoplasmic portion of the chain corresponds to 1–38 (MSKEVSVEGEQPPVKDYTDPPPEPLLNFGELRLWSFYR). Residues 39 to 59 (ALIAEFVATLLFLYVTIATVI) form a helical membrane-spanning segment. Topologically, residues 60–71 (GHKEQNAADQCS) are extracellular. The helical transmembrane segment at 72 to 92 (GVGLLGIAWAFGGMIFILVYC) threads the bilayer. Residues 93 to 120 (TAGISGGHINPAVTLGLFLARKVSLIRA) lie on the Cytoplasmic side of the membrane. An NPA 1 motif is present at residues 102-104 (NPA). The chain crosses the membrane as a helical span at residues 121–141 (LLYMVAQCLGAIVGVGIVKGI). The Extracellular portion of the chain corresponds to 142–162 (MKHQYNSLGGGANVVAAGYSK). Residues 163-183 (GTALGAEIIGTFVLVYTVFSA) traverse the membrane as a helical segment. Residues 184 to 196 (TDPKRSARDSHVP) are Cytoplasmic-facing. A helical transmembrane segment spans residues 197-217 (VLAPLPIGFAVFMVHLATIPI). Residues 218 to 244 (TGTGINPARSLGAAVIYNQDKPWDDHW) lie on the Extracellular side of the membrane. Positions 223–225 (NPA) match the NPA 2 motif. A helical transmembrane segment spans residues 245–265 (ILWVGPFVGALAAAAYHQYIL). Residues 266 to 282 (RAAAIKALGSFRSNPSN) lie on the Cytoplasmic side of the membrane.

This sequence belongs to the MIP/aquaporin (TC 1.A.8) family. PIP (TC 1.A.8.11) subfamily. As to expression, expressed in roots, leaves and fruits.

The protein localises to the cell membrane. Functionally, water channel required to facilitate the transport of water across cell membrane; mercury-insensitive. Contributes to the tolerance to multiple abiotic stresses including salt (NaCl), cold and water deprivation, by modulating cytosolic K(+)/Na(+) ratio, maintaining osmotic balance, and reducing membrane injury (e.g. oxidative injury). Also regulates the expression of abscisic acid (ABA)- biosynthetic and -responsive genes during dehydration and salt stresses. In Musa acuminata (Banana), this protein is Aquaporin PIP2-7.